Consider the following 563-residue polypeptide: Formate--tetrahydrofolate ligase (563 aa).

ATP is bound at residue 65–72; it reads TPLGEGKT.

This sequence belongs to the formate--tetrahydrofolate ligase family.

The enzyme catalyses (6S)-5,6,7,8-tetrahydrofolate + formate + ATP = (6R)-10-formyltetrahydrofolate + ADP + phosphate. The protein operates within one-carbon metabolism; tetrahydrofolate interconversion. In Cutibacterium acnes (strain DSM 16379 / KPA171202) (Propionibacterium acnes), this protein is Formate--tetrahydrofolate ligase.